Here is a 114-residue protein sequence, read N- to C-terminus: Cytokine SCM-1 beta (114 aa).

An N-terminal signal peptide occupies residues 1 to 21; that stretch reads MRLLILALLGICSLTAYIVEG. Cysteine 32 and cysteine 69 are oxidised to a cystine. Residues 91–114 are disordered; the sequence is RNNMIQTKPTGTQQSTNTAVTLTG.

Belongs to the intercrine gamma family.

The protein resides in the secreted. In terms of biological role, chemotactic activity for lymphocytes but not for monocytes or neutrophils. The polypeptide is Cytokine SCM-1 beta (XCL2) (Homo sapiens (Human)).